Here is an 86-residue protein sequence, read N- to C-terminus: MKSIVFVALFGLALLAVVCSASEDAHKELLKEVVRAMVVDKTDAVQAGERECRWYLGGCSQDGDCCKHLQCHSNYEWCIWDGTFSK.

A signal peptide spans 1-21 (MKSIVFVALFGLALLAVVCSA). Residues 22 to 50 (SEDAHKELLKEVVRAMVVDKTDAVQAGER) constitute a propeptide that is removed on maturation. 3 disulfides stabilise this stretch: C52/C66, C59/C71, and C65/C78.

This sequence belongs to the neurotoxin 10 (Hwtx-1) family. 17 (Hntx-9) subfamily. In terms of tissue distribution, expressed by the venom gland.

The protein localises to the secreted. Its function is as follows. Ion channel inhibitor. The polypeptide is Omega-theraphotoxin-Hhn1f 4 (Cyriopagopus hainanus (Chinese bird spider)).